The primary structure comprises 150 residues: MTIKLESLQSNKGSRRKKMRKGRGIAAGQGASCGFGMRGQKSRSGRPTRPGFEGGQMPLYRRVPKLKHFPIVNQKNFTVLNVSRLNALKDGTIVNLDLLVKEGILTKPKNPLKILGNGNLEVKLTVQAAAFTASAKKKIEEVGGSCELYN.

Positions 1 to 57 (MTIKLESLQSNKGSRRKKMRKGRGIAAGQGASCGFGMRGQKSRSGRPTRPGFEGGQM) are disordered. The segment covering 13–23 (GSRRKKMRKGR) has biased composition (basic residues). Gly residues predominate over residues 25 to 37 (IAAGQGASCGFGM).

This sequence belongs to the universal ribosomal protein uL15 family. As to quaternary structure, part of the 50S ribosomal subunit.

Functionally, binds to the 23S rRNA. The protein is Large ribosomal subunit protein uL15 of Prochlorococcus marinus (strain NATL1A).